A 251-amino-acid chain; its full sequence is Pyrroloquinoline-quinone synthase (251 aa).

It belongs to the PqqC family.

It catalyses the reaction 6-(2-amino-2-carboxyethyl)-7,8-dioxo-1,2,3,4,7,8-hexahydroquinoline-2,4-dicarboxylate + 3 O2 = pyrroloquinoline quinone + 2 H2O2 + 2 H2O + H(+). It functions in the pathway cofactor biosynthesis; pyrroloquinoline quinone biosynthesis. In terms of biological role, ring cyclization and eight-electron oxidation of 3a-(2-amino-2-carboxyethyl)-4,5-dioxo-4,5,6,7,8,9-hexahydroquinoline-7,9-dicarboxylic-acid to PQQ. This Pseudomonas putida (strain GB-1) protein is Pyrroloquinoline-quinone synthase.